The sequence spans 370 residues: MTVFTPLVLVCAGGTGGHLFPAQSLAYALKARGIRVALATDARVDSIAGDFPAEEIVTIASATPSGRSMLRRAGAVLTLGRGFGQAARAVRRLNPAAVVGFGGYPTVPPMLAAQLLRVPTILHEQNAVMGRANGFLAKGAQVIATGFKEVRGVPEKATARRIHTGNPIRPSVLAVAETPYPALDEGSPLRLLVFGGSQGARVMSEIVPAAIEKLPQDLRARLHLVQQARPEDLTATQNRYLAMGLGGIEAAPFFKDLPGRMAAAHLVVARSGASTVSELAAIGRPAILVPLPGALDQDQAANAATLAQIGAALSIPQSAFTPDRLAAELVDLFEAPRKLTQAAAAAKTARILDAADRLATLVAETAAATS.

Residues 15–17 (TGG), Asn-126, Arg-169, Ser-197, and Gln-299 contribute to the UDP-N-acetyl-alpha-D-glucosamine site.

This sequence belongs to the glycosyltransferase 28 family. MurG subfamily.

It localises to the cell inner membrane. The enzyme catalyses di-trans,octa-cis-undecaprenyl diphospho-N-acetyl-alpha-D-muramoyl-L-alanyl-D-glutamyl-meso-2,6-diaminopimeloyl-D-alanyl-D-alanine + UDP-N-acetyl-alpha-D-glucosamine = di-trans,octa-cis-undecaprenyl diphospho-[N-acetyl-alpha-D-glucosaminyl-(1-&gt;4)]-N-acetyl-alpha-D-muramoyl-L-alanyl-D-glutamyl-meso-2,6-diaminopimeloyl-D-alanyl-D-alanine + UDP + H(+). Its pathway is cell wall biogenesis; peptidoglycan biosynthesis. Functionally, cell wall formation. Catalyzes the transfer of a GlcNAc subunit on undecaprenyl-pyrophosphoryl-MurNAc-pentapeptide (lipid intermediate I) to form undecaprenyl-pyrophosphoryl-MurNAc-(pentapeptide)GlcNAc (lipid intermediate II). The polypeptide is UDP-N-acetylglucosamine--N-acetylmuramyl-(pentapeptide) pyrophosphoryl-undecaprenol N-acetylglucosamine transferase (Methylorubrum populi (strain ATCC BAA-705 / NCIMB 13946 / BJ001) (Methylobacterium populi)).